The sequence spans 254 residues: Insulin-like growth factor-binding protein 4 (254 aa).

The N-terminal stretch at 1–21 (MLPFGLVAALLLAAGPRPSLG) is a signal peptide. The 81-residue stretch at 23–103 (EAIHCPPCSE…MHGQGVCTEL (81 aa)) folds into the IGFBP N-terminal domain. Cystine bridges form between cysteine 27–cysteine 53, cysteine 30–cysteine 55, cysteine 38–cysteine 56, cysteine 44–cysteine 59, cysteine 67–cysteine 80, and cysteine 74–cysteine 100. Asparagine 125 carries N-linked (GlcNAc...) asparagine glycosylation. Cysteine 131 and cysteine 138 are disulfide-bonded. Residues 149–169 (RSKMKVVGTPREEPRPVPQGS) form a disordered region. Positions 167–245 (QGSCQSELHR…GLEPKGELDC (79 aa)) constitute a Thyroglobulin type-1 domain. Cystine bridges form between cysteine 170–cysteine 200, cysteine 211–cysteine 222, and cysteine 224–cysteine 245. Position 251 is a phosphoserine (serine 251).

Binds IGF2 more than IGF1.

The protein resides in the secreted. IGF-binding proteins prolong the half-life of the IGFs and have been shown to either inhibit or stimulate the growth promoting effects of the IGFs on cell culture. They alter the interaction of IGFs with their cell surface receptors. The chain is Insulin-like growth factor-binding protein 4 (Igfbp4) from Rattus norvegicus (Rat).